Consider the following 254-residue polypeptide: Receptor expression-enhancing protein 2 (254 aa).

The next 2 helical transmembrane spans lie at 1 to 21 and 35 to 55; these read MVSWIISRLVVLIFGTLYPAY and YVKWMMYWIVFAFFTTAETLT. Serine 152 is subject to Phosphoserine. A disordered region spans residues 164–254; that stretch reads ALPLQGPDGR…KKTSAGGDSA (91 aa). Over residues 195-204 the composition is skewed to polar residues; it reads SVRSGTNQAD. The segment covering 205-219 has biased composition (basic and acidic residues); the sequence is PRTEISEDDTGDKAP.

It belongs to the DP1 family. As to quaternary structure, interacts with odorant receptor proteins.

The protein resides in the membrane. Required for endoplasmic reticulum (ER) network formation, shaping and remodeling. May enhance the cell surface expression of odorant receptors. The protein is Receptor expression-enhancing protein 2 (REEP2) of Bos taurus (Bovine).